We begin with the raw amino-acid sequence, 263 residues long: Small ribosomal subunit protein eS4, Y isoform 2 (263 aa).

The S4 RNA-binding domain occupies 42–104 (LPLIVFLRNR…TGEHFRLVYN (63 aa)).

This sequence belongs to the eukaryotic ribosomal protein eS4 family.

The protein is Small ribosomal subunit protein eS4, Y isoform 2 (RPS4Y2) of Homo sapiens (Human).